Reading from the N-terminus, the 92-residue chain is Long neurotoxin 3FTx-Oxy1 (92 aa).

Residues 1–21 (MKTLLLTLVVVTIVCLDLGYT) form the signal peptide. 5 disulfide bridges follow: C24-C42, C35-C63, C48-C52, C67-C79, and C80-C85.

Belongs to the three-finger toxin family. Long-chain subfamily. Type II alpha-neurotoxin sub-subfamily. In terms of tissue distribution, expressed by the venom gland.

The protein resides in the secreted. Its function is as follows. Binds with high affinity to muscular (alpha-1/CHRNA1) and neuronal (alpha-7/CHRNA7) nicotinic acetylcholine receptor (nAChR) and inhibits acetylcholine from binding to the receptor, thereby impairing neuromuscular and neuronal transmission. This is Long neurotoxin 3FTx-Oxy1 from Oxyuranus microlepidotus (Inland taipan).